We begin with the raw amino-acid sequence, 300 residues long: Epimerase family protein SAR0825 (300 aa).

Belongs to the NAD(P)-dependent epimerase/dehydratase family. SDR39U1 subfamily.

The polypeptide is Epimerase family protein SAR0825 (Staphylococcus aureus (strain MRSA252)).